The primary structure comprises 132 residues: MSGGKGGKAGSAAKASQSRSAKAGLTFPVGRVHRLLRRGNYAQRIGSGAPVYLTAVLEYLAAEILELAGNAARDNKKTRIIPRHLQLAIRNDDELNKLLGNVTIAQGGVLPNIHQNLLPKKSAKATKASQEL.

Residue serine 2 is modified to N-acetylserine. N6-acetyllysine is present on residues lysine 5 and lysine 8. Lysine 14 and lysine 22 each carry N6-succinyllysine. At glutamine 106 the chain carries N5-methylglutamine. Residue lysine 120 is modified to N6-malonyllysine; alternate. A Glycyl lysine isopeptide (Lys-Gly) (interchain with G-Cter in SUMO) cross-link involves residue lysine 127. Serine 129 bears the Phosphoserine mark. The [ST]-Q motif signature appears at 129–130; the sequence is SQ.

This sequence belongs to the histone H2A family. The nucleosome is a histone octamer containing two molecules each of H2A, H2B, H3 and H4 assembled in one H3-H4 heterotetramer and two H2A-H2B heterodimers. The octamer wraps approximately 147 bp of DNA. Post-translationally, phosphorylated to form H2AS128ph (gamma-H2A) in response to DNA double-strand breaks (DSBs) generated by exogenous genotoxic agents and by stalled replication forks. Phosphorylation is dependent on the DNA damage checkpoint kinases MEC1/ATR and TEL1/ATM, spreads on either side of a detected DSB site and may mark the surrounding chromatin for recruitment of proteins required for DNA damage signaling and repair. Gamma-H2A interacts with ARP4, a shared component of the NuA4 histone acetyltransferase complex and the INO80 and SWR1 chromatin remodeling complexes, and serves to recruit first NuA4, mediating histone H4 acetylation, and subsequently the INO80/SWR1 complexes, facilitating DNA resection, to DSB sites. Gamma-H2A is required for sequestering cohesin around the break site, which is important for efficient post-replicative double-strand break repair by homologous recombination, holding the damaged chromatid close to its undamaged sister template. Gamma-H2A is removed from the DNA prior to the strand invasion-primer extension step of the repair process and subsequently dephosphorylated by PPH3, a component of the histone H2A phosphatase complex (HTP-C). Dephosphorylation is necessary for efficient recovery from the DNA damage checkpoint. In terms of processing, N-acetylated by NAT4. Acetylated by ESA1, a component of the NuA4 histone acetyltransferase (HAT) complex, to form H2AK4ac and H2AK7ac. Post-translationally, glutamine methylation at Gln-106 (H2AQ105me) by NOP1 is specifically dedicated to polymerase I. It is present at 35S ribosomal DNA locus and impairs binding of the FACT complex. In terms of processing, sumoylated to from H2AK126su. May lead to transcriptional repression.

The protein localises to the nucleus. Its subcellular location is the chromosome. In terms of biological role, core component of nucleosome which plays a central role in DNA double strand break (DSB) repair. Nucleosomes wrap and compact DNA into chromatin, limiting DNA accessibility to the cellular machineries which require DNA as a template. Histones thereby play a central role in transcription regulation, DNA repair, DNA replication and chromosomal stability. DNA accessibility is regulated via a complex set of post-translational modifications of histones, also called histone code, and nucleosome remodeling. The chain is Histone H2A.1 (HTA1) from Saccharomyces cerevisiae (strain ATCC 204508 / S288c) (Baker's yeast).